The following is a 329-amino-acid chain: NADH-quinone oxidoreductase subunit H (329 aa).

9 consecutive transmembrane segments (helical) span residues 9–29 (LIKILILVAVFSALGGFATYI), 42–62 (GPCYVGPFGLLQVAADGIKLF), 75–95 (FIFTLAPIIAMVSAFVSMAPI), 117–137 (IGFLFFLAVGAAGIYAPILAG), 154–174 (IQLLSFEVVSTLTILAPLMVV), 188–208 (GGFLDWLVFKQPLAFVLFLIA), 238–258 (LKWGMFFLAEYAHLFAFSFVI), 260–280 (IVFFGGFNAWGFIPGGLAILI), and 309–329 (WKIMLPLALLNIVLTGIIILI).

Belongs to the complex I subunit 1 family. In terms of assembly, NDH-1 is composed of 14 different subunits. Subunits NuoA, H, J, K, L, M, N constitute the membrane sector of the complex.

Its subcellular location is the cell inner membrane. The catalysed reaction is a quinone + NADH + 5 H(+)(in) = a quinol + NAD(+) + 4 H(+)(out). In terms of biological role, NDH-1 shuttles electrons from NADH, via FMN and iron-sulfur (Fe-S) centers, to quinones in the respiratory chain. The immediate electron acceptor for the enzyme in this species is believed to be ubiquinone. Couples the redox reaction to proton translocation (for every two electrons transferred, four hydrogen ions are translocated across the cytoplasmic membrane), and thus conserves the redox energy in a proton gradient. This subunit may bind ubiquinone. The polypeptide is NADH-quinone oxidoreductase subunit H (Helicobacter pylori (strain G27)).